The following is a 106-amino-acid chain: ATP-dependent Clp protease adapter protein ClpS (106 aa).

It belongs to the ClpS family. As to quaternary structure, binds to the N-terminal domain of the chaperone ClpA.

Involved in the modulation of the specificity of the ClpAP-mediated ATP-dependent protein degradation. This chain is ATP-dependent Clp protease adapter protein ClpS, found in Nocardia farcinica (strain IFM 10152).